The chain runs to 353 residues: Uroporphyrinogen decarboxylase (353 aa).

Substrate is bound by residues 25 to 29, Asp74, Tyr151, Ser206, and His325; that span reads RQAGR.

The protein belongs to the uroporphyrinogen decarboxylase family. As to quaternary structure, homodimer.

The protein resides in the cytoplasm. The enzyme catalyses uroporphyrinogen III + 4 H(+) = coproporphyrinogen III + 4 CO2. It participates in porphyrin-containing compound metabolism; protoporphyrin-IX biosynthesis; coproporphyrinogen-III from 5-aminolevulinate: step 4/4. Functionally, catalyzes the decarboxylation of four acetate groups of uroporphyrinogen-III to yield coproporphyrinogen-III. This chain is Uroporphyrinogen decarboxylase, found in Chloroherpeton thalassium (strain ATCC 35110 / GB-78).